A 252-amino-acid chain; its full sequence is uncharacterized protein (252 aa).

The signal sequence occupies residues methionine 1–alanine 23. The tract at residues glutamate 231–methionine 252 is disordered.

This is an uncharacterized protein from Escherichia coli (strain K12).